The following is a 589-amino-acid chain: Putative ABC transporter ATP-binding protein MG015 (589 aa).

6 helical membrane-spanning segments follow: residues 9-29 (LLYV…NPIL), 66-86 (LTIV…FNVA), 161-181 (LIFL…ATLI), 251-271 (IFLF…SISI), 280-300 (IPSF…IASL), and 303-323 (ITLA…GVVS). One can recognise an ABC transmembrane type-1 domain in the interval 9 to 319 (LLYVFLCIVL…IFTLWNLVQL (311 aa)). The 235-residue stretch at 352–586 (IRFENVAFGY…NGFYARLKQS (235 aa)) folds into the ABC transporter domain. Position 385–392 (385–392 (GPTGAGKS)) interacts with ATP.

The protein belongs to the ABC transporter superfamily.

The protein resides in the cell membrane. The chain is Putative ABC transporter ATP-binding protein MG015 from Mycoplasma genitalium (strain ATCC 33530 / DSM 19775 / NCTC 10195 / G37) (Mycoplasmoides genitalium).